A 91-amino-acid chain; its full sequence is Small nuclear ribonucleoprotein F (91 aa).

A Sm domain is found at 8-81 (APKPFLYDLK…VLFVRGIDDE (74 aa)).

Belongs to the snRNP Sm proteins family. SmF/LSm6 subfamily. In terms of assembly, core component of the spliceosomal U1, U2, U4 and U5 small nuclear ribonucleoproteins (snRNPs), the building blocks of the spliceosome. Most spliceosomal snRNPs contain a common set of Sm proteins, SNRPB, SNRPD1, SNRPD2, SNRPD3, SNRPE, SNRPF and SNRPG that assemble in a heptameric protein ring on the Sm site of the small nuclear RNA to form the core snRNP. Component of the U1 snRNP. Component of the U4/U6-U5 tri-snRNP complex. Component of the U7 snRNP complex. Component of the U11/U12 snRNPs that are part of the U12-type spliceosome. Part of the SMN-Sm complex that catalyzes core snRNPs assembly.

It localises to the cytoplasm. The protein resides in the cytosol. It is found in the nucleus. Plays a role in pre-mRNA splicing as a core component of the spliceosomal U1, U2, U4 and U5 small nuclear ribonucleoproteins (snRNPs), the building blocks of the spliceosome. Component of both the pre-catalytic spliceosome B complex and activated spliceosome C complexes. Is also a component of the minor U12 spliceosome. This chain is Small nuclear ribonucleoprotein F (snrpf), found in Dictyostelium discoideum (Social amoeba).